The following is a 600-amino-acid chain: MTDTPLSLIRNFSIIAHIDHGKSTLADRLIQACGALTAREMKNQVLDSMELEQERGITIKAQTVRLTYPAKDGKVYTLNLMDTPGHVDFAYEVSRSLAACEGSLLVVDASQGVEAQTLANVYQALDANHEIVPVLNKIDLPAAEPERVRAQIEDVVGIPADDAVEISAKTGINIEGVLEALVQRLPAPTGDAEAPLQALLVDSWYDAYLGVIILVRIKDGRLKRGDRIRMMQTGATYHVDQVGVFLPKMQSVESLGPGEMGYINAAIKTVADCNVGDTVTLDKRPAEKALPGFKPSIPVVWCGLFPIDADDFEKLRDSLGKLRLNDASFHFEAETSAALGFGFRCGFLGLLHLEIIQERLSREFNLDLIATAPSVVYKMHMTDGTVEELHNPADMPELSKIEMIEEPWIKATIMVQDEYLGPVLTLCSERRGIQVDLTYVGNRAMAVYRLPLNEVVFDFYDRLKSISRGYASFDYQMDGYEESDLVRISILVNHEPVDALSFISHRTVAEQRGRSICAKLKDLIPKQLFKIAIQAAIGSKVIARETIGALSKDVTAKCYGGDISRKRKLLDKQKEGKKRMRQFGKVEIPQSAFLAALKMD.

In terms of domain architecture, tr-type G spans Ser-7–Thr-189. Residues Asp-19–Thr-24 and Asn-136–Asp-139 contribute to the GTP site.

Belongs to the TRAFAC class translation factor GTPase superfamily. Classic translation factor GTPase family. LepA subfamily.

It is found in the cell inner membrane. The catalysed reaction is GTP + H2O = GDP + phosphate + H(+). Functionally, required for accurate and efficient protein synthesis under certain stress conditions. May act as a fidelity factor of the translation reaction, by catalyzing a one-codon backward translocation of tRNAs on improperly translocated ribosomes. Back-translocation proceeds from a post-translocation (POST) complex to a pre-translocation (PRE) complex, thus giving elongation factor G a second chance to translocate the tRNAs correctly. Binds to ribosomes in a GTP-dependent manner. This is Elongation factor 4 from Gluconobacter oxydans (strain 621H) (Gluconobacter suboxydans).